The sequence spans 205 residues: Holliday junction branch migration complex subunit RuvA (205 aa).

The domain I stretch occupies residues Met-1–Ile-64. The domain II stretch occupies residues Ser-65–Asp-143. Positions Gln-136–His-157 are disordered. Residues Arg-144–Glu-156 form a flexible linker region. Residues His-157–Ser-205 form a domain III region.

The protein belongs to the RuvA family. As to quaternary structure, homotetramer. Forms an RuvA(8)-RuvB(12)-Holliday junction (HJ) complex. HJ DNA is sandwiched between 2 RuvA tetramers; dsDNA enters through RuvA and exits via RuvB. An RuvB hexamer assembles on each DNA strand where it exits the tetramer. Each RuvB hexamer is contacted by two RuvA subunits (via domain III) on 2 adjacent RuvB subunits; this complex drives branch migration. In the full resolvosome a probable DNA-RuvA(4)-RuvB(12)-RuvC(2) complex forms which resolves the HJ.

Its subcellular location is the cytoplasm. The RuvA-RuvB-RuvC complex processes Holliday junction (HJ) DNA during genetic recombination and DNA repair, while the RuvA-RuvB complex plays an important role in the rescue of blocked DNA replication forks via replication fork reversal (RFR). RuvA specifically binds to HJ cruciform DNA, conferring on it an open structure. The RuvB hexamer acts as an ATP-dependent pump, pulling dsDNA into and through the RuvAB complex. HJ branch migration allows RuvC to scan DNA until it finds its consensus sequence, where it cleaves and resolves the cruciform DNA. The chain is Holliday junction branch migration complex subunit RuvA from Idiomarina loihiensis (strain ATCC BAA-735 / DSM 15497 / L2-TR).